Here is a 461-residue protein sequence, read N- to C-terminus: Nuclear distribution protein PAC1 (461 aa).

The 33-residue stretch at 9-41 (QAEELHKSIIAYLTANNLLNTANTLRAELNLSE) folds into the LisH domain. WD repeat units lie at residues 114-155 (SHRD…RTIK), 157-197 (HTRA…KNIR), 201-248 (GHDH…CVRT), 251-290 (GHTA…PESK), 312-355 (QYLS…LMTL), 357-396 (GHDN…KCIK), and 401-457 (AHER…MKLR).

This sequence belongs to the WD repeat LIS1/nudF family. Self-associates. Interacts with NDL1 and dynein.

It localises to the cytoplasm. The protein resides in the cytoskeleton. The protein localises to the spindle pole. Its function is as follows. Positively regulates the activity of the minus-end directed microtubule motor protein dynein. May enhance dynein-mediated microtubule sliding by targeting dynein to the microtubule plus end. Required for nuclear migration during vegetative growth as well as development. Required for retrograde early endosome (EE) transport from the hyphal tip. Required for localization of dynein to the mitotic spindle poles. Recruits additional proteins to the dynein complex at SPBs. This Arthroderma otae (strain ATCC MYA-4605 / CBS 113480) (Microsporum canis) protein is Nuclear distribution protein PAC1.